A 190-amino-acid chain; its full sequence is Lipid A acyltransferase PagP (190 aa).

A signal peptide spans 1-18; it reads MKRLISCLTIICALNASA. Active-site residues include His60, Asp103, and Ser104.

This sequence belongs to the lipid A palmitoyltransferase family. As to quaternary structure, homodimer.

The protein localises to the cell outer membrane. It carries out the reaction a lipid A + a 1,2-diacyl-sn-glycero-3-phosphocholine = a hepta-acyl lipid A + a 2-acyl-sn-glycero-3-phosphocholine. It catalyses the reaction a lipid IVA + a 1,2-diacyl-sn-glycero-3-phosphocholine = a lipid IVB + a 2-acyl-sn-glycero-3-phosphocholine. The enzyme catalyses a lipid IIA + a 1,2-diacyl-sn-glycero-3-phosphocholine = a lipid IIB + a 2-acyl-sn-glycero-3-phosphocholine. Functionally, transfers a fatty acid residue from the sn-1 position of a phospholipid to the N-linked hydroxyfatty acid chain on the proximal unit of lipid A or its precursors. This Legionella pneumophila (strain Corby) protein is Lipid A acyltransferase PagP.